A 185-amino-acid polypeptide reads, in one-letter code: HTH-type transcriptional regulator Hpr (185 aa).

One can recognise an HTH marR-type domain in the interval 13-157; sequence AMIFSQRIAQ…LIAILRNIYG (145 aa). Positions 63–86 form a DNA-binding region, H-T-H motif; it reads ISEIAKFGVMHVSTAFNFSKKLEE.

Homodimer.

Negative regulator of protease production and sporulation. The sequence is that of HTH-type transcriptional regulator Hpr from Bacillus anthracis (strain CDC 684 / NRRL 3495).